The following is a 577-amino-acid chain: Mitochondrial-processing peptidase subunit alpha (577 aa).

A mitochondrion-targeting transit peptide spans 1 to 35 (MLNRFRPARLVAQSSRCLPLTRARAGPLPVNNART). Positions 259 to 301 (SDAPGLSRTGSETSVDSLVSESSEASSESSSSSSDSSESSGGL) are disordered. A compositionally biased stretch (low complexity) spans 269 to 301 (SETSVDSLVSESSEASSESSSSSSDSSESSGGL).

The protein belongs to the peptidase M16 family. In terms of assembly, heterodimer of mpp (alpha) and pep (beta) subunits, forming the mitochondrial processing protease (MPP) in which mpp is involved in substrate recognition and binding and pep is the catalytic subunit.

The protein localises to the mitochondrion matrix. Functionally, substrate recognition and binding subunit of the essential mitochondrial processing protease (MPP), which cleaves the mitochondrial sequence off newly imported precursors proteins. The polypeptide is Mitochondrial-processing peptidase subunit alpha (Neurospora crassa (strain ATCC 24698 / 74-OR23-1A / CBS 708.71 / DSM 1257 / FGSC 987)).